A 156-amino-acid polypeptide reads, in one-letter code: SsrA-binding protein (156 aa).

This sequence belongs to the SmpB family.

It localises to the cytoplasm. Required for rescue of stalled ribosomes mediated by trans-translation. Binds to transfer-messenger RNA (tmRNA), required for stable association of tmRNA with ribosomes. tmRNA and SmpB together mimic tRNA shape, replacing the anticodon stem-loop with SmpB. tmRNA is encoded by the ssrA gene; the 2 termini fold to resemble tRNA(Ala) and it encodes a 'tag peptide', a short internal open reading frame. During trans-translation Ala-aminoacylated tmRNA acts like a tRNA, entering the A-site of stalled ribosomes, displacing the stalled mRNA. The ribosome then switches to translate the ORF on the tmRNA; the nascent peptide is terminated with the 'tag peptide' encoded by the tmRNA and targeted for degradation. The ribosome is freed to recommence translation, which seems to be the essential function of trans-translation. The polypeptide is SsrA-binding protein (Clostridium botulinum (strain Loch Maree / Type A3)).